A 105-amino-acid chain; its full sequence is Large ribosomal subunit protein bL21 (105 aa).

Belongs to the bacterial ribosomal protein bL21 family. As to quaternary structure, part of the 50S ribosomal subunit. Contacts protein L20.

In terms of biological role, this protein binds to 23S rRNA in the presence of protein L20. The sequence is that of Large ribosomal subunit protein bL21 from Bacteroides fragilis (strain YCH46).